The primary structure comprises 274 residues: 2,3,4,5-tetrahydropyridine-2,6-dicarboxylate N-succinyltransferase (274 aa).

This sequence belongs to the transferase hexapeptide repeat family.

It is found in the cytoplasm. It carries out the reaction (S)-2,3,4,5-tetrahydrodipicolinate + succinyl-CoA + H2O = (S)-2-succinylamino-6-oxoheptanedioate + CoA. It participates in amino-acid biosynthesis; L-lysine biosynthesis via DAP pathway; LL-2,6-diaminopimelate from (S)-tetrahydrodipicolinate (succinylase route): step 1/3. This is 2,3,4,5-tetrahydropyridine-2,6-dicarboxylate N-succinyltransferase from Delftia acidovorans (strain DSM 14801 / SPH-1).